We begin with the raw amino-acid sequence, 283 residues long: Putative aquaporin NIP4-1 (283 aa).

Met-1 carries the post-translational modification N-acetylmethionine. A run of 2 helical transmembrane segments spans residues 45–65 and 70–90; these read LIAE…VVVV and GGTI…MVMI. An NPA 1 motif is present at residues 102–104; it reads NPA. 3 consecutive transmembrane segments (helical) span residues 122–142, 161–181, and 189–209; these read LYIG…RLMF, ALVA…GVAT, and LAGI…GPIS. Positions 214–216 match the NPA 2 motif; the sequence is NPA. The chain crosses the membrane as a helical span at residues 231–251; it reads IWVYIVGPVLGVISGGFVYNL. Ser-267 is subject to Phosphoserine.

The protein belongs to the MIP/aquaporin (TC 1.A.8) family. NIP (TC 1.A.8.12) subfamily.

It is found in the membrane. Potential aquaporin, which may facilitate the transport of water and small neutral solutes across cell membranes. The protein is Putative aquaporin NIP4-1 (NIP4-1) of Arabidopsis thaliana (Mouse-ear cress).